We begin with the raw amino-acid sequence, 506 residues long: UDP-N-acetylmuramoylalanine--D-glutamate ligase (506 aa).

An ATP-binding site is contributed by 128-134 (GTNGKTT).

The protein belongs to the MurCDEF family.

It is found in the cytoplasm. It carries out the reaction UDP-N-acetyl-alpha-D-muramoyl-L-alanine + D-glutamate + ATP = UDP-N-acetyl-alpha-D-muramoyl-L-alanyl-D-glutamate + ADP + phosphate + H(+). Its pathway is cell wall biogenesis; peptidoglycan biosynthesis. Its function is as follows. Cell wall formation. Catalyzes the addition of glutamate to the nucleotide precursor UDP-N-acetylmuramoyl-L-alanine (UMA). The chain is UDP-N-acetylmuramoylalanine--D-glutamate ligase from Albidiferax ferrireducens (strain ATCC BAA-621 / DSM 15236 / T118) (Rhodoferax ferrireducens).